Here is a 36-residue protein sequence, read N- to C-terminus: Endoglucanase Cel12A (36 aa).

It belongs to the glycosyl hydrolase 12 (cellulase H) family.

It is found in the secreted. Its subcellular location is the extracellular space. The catalysed reaction is Endohydrolysis of (1-&gt;4)-beta-D-glucosidic linkages in cellulose, lichenin and cereal beta-D-glucans.. Has carboxymethylcellulase activity. The protein is Endoglucanase Cel12A of Gloeophyllum trabeum (Brown rot fungus).